The primary structure comprises 221 residues: Adenylate kinase (221 aa).

10-15 (GAGKGT) provides a ligand contact to ATP. Residues 30 to 59 (STGDIFRQNLRDNTELGKLAKEYMDKGLLV) are NMP. AMP contacts are provided by residues threonine 31, arginine 36, 57 to 59 (LLV), 85 to 88 (GYPR), and glutamine 92. The tract at residues 126–163 (GRRVCPVCGATYHIKTSPPKVDNVCDKCGSELIQRSDD) is LID. Arginine 127 contributes to the ATP binding site. Cysteine 130 and cysteine 133 together coordinate Zn(2+). Position 136–137 (136–137 (TY)) interacts with ATP. Zn(2+) is bound by residues cysteine 150 and cysteine 153. Residues arginine 160 and arginine 171 each contribute to the AMP site. Lysine 199 is an ATP binding site.

The protein belongs to the adenylate kinase family. Monomer.

Its subcellular location is the cytoplasm. The enzyme catalyses AMP + ATP = 2 ADP. It functions in the pathway purine metabolism; AMP biosynthesis via salvage pathway; AMP from ADP: step 1/1. Catalyzes the reversible transfer of the terminal phosphate group between ATP and AMP. Plays an important role in cellular energy homeostasis and in adenine nucleotide metabolism. The polypeptide is Adenylate kinase (Caldanaerobacter subterraneus subsp. tengcongensis (strain DSM 15242 / JCM 11007 / NBRC 100824 / MB4) (Thermoanaerobacter tengcongensis)).